Here is a 433-residue protein sequence, read N- to C-terminus: 3-phosphoshikimate 1-carboxyvinyltransferase (433 aa).

3-phosphoshikimate-binding residues include Lys23, Ser24, and Arg28. A phosphoenolpyruvate-binding site is contributed by Lys23. 2 residues coordinate phosphoenolpyruvate: Gly95 and Arg123. Residues Ser170, Ser171, Gln172, Ser198, Asp317, and Lys344 each contribute to the 3-phosphoshikimate site. Gln172 serves as a coordination point for phosphoenolpyruvate. Asp317 (proton acceptor) is an active-site residue. Phosphoenolpyruvate is bound by residues Arg348, Arg391, and Lys416.

The protein belongs to the EPSP synthase family. In terms of assembly, monomer.

The protein localises to the cytoplasm. It catalyses the reaction 3-phosphoshikimate + phosphoenolpyruvate = 5-O-(1-carboxyvinyl)-3-phosphoshikimate + phosphate. It participates in metabolic intermediate biosynthesis; chorismate biosynthesis; chorismate from D-erythrose 4-phosphate and phosphoenolpyruvate: step 6/7. Functionally, catalyzes the transfer of the enolpyruvyl moiety of phosphoenolpyruvate (PEP) to the 5-hydroxyl of shikimate-3-phosphate (S3P) to produce enolpyruvyl shikimate-3-phosphate and inorganic phosphate. This is 3-phosphoshikimate 1-carboxyvinyltransferase from Neisseria gonorrhoeae (strain NCCP11945).